The sequence spans 174 residues: 16S rRNA aminocarboxypropyltransferase (174 aa).

Residues Thr26, Leu73, Leu97, and Ser116 each coordinate S-adenosyl-L-methionine.

Belongs to the TDD superfamily. TSR3 family.

The protein resides in the cytoplasm. The catalysed reaction is an N(1)-methylpseudouridine in rRNA + S-adenosyl-L-methionine = N(1)-methyl-N(3)-[(3S)-3-amino-3-carboxypropyl]pseudouridine in rRNA + S-methyl-5'-thioadenosine + H(+). Aminocarboxypropyltransferase that catalyzes the aminocarboxypropyl transfer on pseudouridine corresponding to position 914 in M.jannaschii 16S rRNA. It constitutes the last step in biosynthesis of the hypermodified N1-methyl-N3-(3-amino-3-carboxypropyl) pseudouridine (m1acp3-Psi). In Methanosarcina acetivorans (strain ATCC 35395 / DSM 2834 / JCM 12185 / C2A), this protein is 16S rRNA aminocarboxypropyltransferase.